The sequence spans 231 residues: Large ribosomal subunit protein uL1 (231 aa).

The protein belongs to the universal ribosomal protein uL1 family. As to quaternary structure, part of the 50S ribosomal subunit.

Its function is as follows. Binds directly to 23S rRNA. The L1 stalk is quite mobile in the ribosome, and is involved in E site tRNA release. In terms of biological role, protein L1 is also a translational repressor protein, it controls the translation of the L11 operon by binding to its mRNA. This is Large ribosomal subunit protein uL1 from Pseudomonas entomophila (strain L48).